Here is a 158-residue protein sequence, read N- to C-terminus: Male-specific protein scotti (158 aa).

The tract at residues 24–43 (NVPDGNGDGDGDGDGDGNDA) is disordered. Over residues 30–42 (GDGDGDGDGDGND) the composition is skewed to acidic residues.

The protein belongs to the male-specific scotti family.

Functionally, post-meiotically transcribed gene that has a role in late spermiogenesis; required for actin cone progression during spermatid individualization. The chain is Male-specific protein scotti from Drosophila virilis (Fruit fly).